Consider the following 1771-residue polypeptide: Kinase D-interacting substrate of 220 kDa (1771 aa).

The Cytoplasmic segment spans residues 1-499 (MSVLISQSVI…QIEPLFQFSW (499 aa)). ANK repeat units lie at residues 4 to 33 (LISQ…DVDE), 37 to 66 (CGQT…NCNL), 70 to 99 (DNWT…NLEH), 103 to 132 (GGWT…NPSV), 136 to 165 (YSVY…KVNC), 169 to 198 (YGTT…DVDQ), 202 to 231 (NSMT…NVNL), 235 to 264 (DGNT…YVNI), 268 to 297 (SGDT…DIDI), 301 to 330 (DNKT…DTEI), 334 to 363 (DGET…KVSA), and 367 to 396 (KGDT…DGRL). The KAP NTPase domain occupies 440–953 (YDLYSSALAD…NIVSVTGRLL (514 aa)). The helical transmembrane segment at 500-520 (LIVFLTLLLCGGLGLLFAFTV) threads the bilayer. Residues 521–524 (HPNL) are Extracellular-facing. A helical transmembrane segment spans residues 525–545 (GIAVSLSFLALLYIFFIVIYF). The Cytoplasmic segment spans residues 546-659 (GGRREGESWN…KWKKTCCLPS (114 aa)). A helical transmembrane segment spans residues 660–680 (FVIFLFIIGCIISGITLLAIF). Topologically, residues 681 to 685 (RVDPK) are extracellular. A helical transmembrane segment spans residues 686-706 (HLTVNAVLISIASVVGLAFVL). Topologically, residues 707–1771 (NCRTWWQVLD…GFGEERESIL (1065 aa)) are cytoplasmic. Residues S882 and S885 each carry the phosphoserine modification. The residue at position 914 (T914) is a Phosphothreonine. At S918 the chain carries Phosphoserine. The segment at 1089–1092 (PRAP) is mediates interaction with CRKL. S1163 carries the phosphoserine modification. 4 disordered regions span residues 1182–1202 (DAAE…PAPG), 1285–1310 (PEDP…RASH), 1344–1368 (RHSN…SQDS), and 1397–1564 (LEGG…EPIR). Phosphoserine occurs at positions 1296, 1352, 1359, 1361, 1362, and 1365. The span at 1346–1358 (SNLSWQSQTRRTP) shows a compositional bias: polar residues. A compositionally biased stretch (low complexity) spans 1359 to 1368 (SLSSLNSQDS). Residues 1403-1430 (STTISGRSSPHSTYYMGQSSSGGSIHSN) show a composition bias toward polar residues. The span at 1431-1457 (LEQEKGKDSEPKPDDGRKSFLMKRGDV) shows a compositional bias: basic and acidic residues. Polar residues predominate over residues 1460 to 1470 (YSSSGVSTNDA). Phosphoserine occurs at positions 1521, 1526, 1555, and 1574. Acidic residues predominate over residues 1522-1532 (DEDESGTEESD). Basic and acidic residues predominate over residues 1537–1561 (LKDDKDRKAEGKVERVPKSPEHSAE). A disordered region spans residues 1578–1633 (LDKKDSSDSGVRSSESSPNHSLHNEVADDSQLEKANLIELEDDSHSGKRGIPHSLS). The span at 1585–1594 (DSGVRSSESS) shows a compositional bias: low complexity. Phosphoserine occurs at positions 1623 and 1633. T1679 is subject to Phosphothreonine. S1681 is subject to Phosphoserine. Phosphothreonine is present on T1684. Polar residues predominate over residues 1713–1731 (LRPSSSPNPTTIQNENLKS). The tract at residues 1713-1771 (LRPSSSPNPTTIQNENLKSMTHKRSQRSSYTRLSKDPPELHAAASSESTGFGEERESIL) is disordered. Positions 1766 to 1771 (ERESIL) match the PDZ-binding motif.

As to quaternary structure, found in a complex, at least composed of KIDINS220, MAGI2, NTRK1 and RAPGEF2; the complex is mainly formed at late endosomes in a nerve growth factor (NGF)-dependent manner. Interacts with RAPGEF2; the interaction is strengthened after NGF stimulation. Isoform 2 interacts (via C-terminal domain) with MAGI2 isoform 1 (via PDZ domain). Interacts with NTRK1, NTRK2, NTRK3, ERKL and NGFR. Can form a ternary complex with NGFR and NTRK1 and this complex is affected by the expression levels of KIDINS220/ARMS. An increase in KIDINS220/ARMS expression leads to a decreased association of NGFR and NTRK1. Interacts (via PDZ-binding motif) with SNTA1 and SNTB2 (via PDZ domains). Interacts with EPHA4 and PRKD1. Tyrosine phosphorylated by NTRK1, NTRK2, EPHB2 and EPHA4. Phosphorylation at Ser-918 is induced by phorbol ester treatment. Phosphorylation by NTRK2 is induced by brain-derived neurotrophic factor (BDNF) and neurotrophin-4/5. Phosphorylation by NTRK1 is induced by nerve growth factor (NGF). Abundant in developing and adult neural tissues as well as neuroendocrine cells and dendritic cells. Overexpressed in melanoma and melanoma cell lines.

The protein localises to the membrane. Its subcellular location is the late endosome. Functionally, promotes a prolonged MAP-kinase signaling by neurotrophins through activation of a Rap1-dependent mechanism. Provides a docking site for the CRKL-C3G complex, resulting in Rap1-dependent sustained ERK activation. May play an important role in regulating postsynaptic signal transduction through the syntrophin-mediated localization of receptor tyrosine kinases such as EPHA4. In cooperation with SNTA1 can enhance EPHA4-induced JAK/STAT activation. Plays a role in nerve growth factor (NGF)-induced recruitment of RAPGEF2 to late endosomes and neurite outgrowth. May play a role in neurotrophin- and ephrin-mediated neuronal outgrowth and in axon guidance during neural development and in neuronal regeneration. Modulates stress-induced apoptosis of melanoma cells via regulation of the MEK/ERK signaling pathway. The sequence is that of Kinase D-interacting substrate of 220 kDa (KIDINS220) from Homo sapiens (Human).